A 489-amino-acid polypeptide reads, in one-letter code: Betaine aldehyde dehydrogenase (489 aa).

K(+) contacts are provided by Thr-26 and Asp-93. NAD(+) is bound at residue 150-152; it reads GAW. Lys-162 functions as the Charge relay system in the catalytic mechanism. NAD(+) is bound at residue 176-179; the sequence is KPSE. K(+) is bound at residue Val-180. 229–232 is a binding site for NAD(+); that stretch reads GVET. Leu-245 contacts K(+). Residue Glu-251 is the Proton acceptor of the active site. Residues Gly-253, Cys-285, and Glu-386 each coordinate NAD(+). Residue Cys-285 is the Nucleophile of the active site. Cys-285 bears the Cysteine sulfenic acid (-SOH) mark. K(+) is bound by residues Lys-456 and Gly-459. Residue Glu-463 is the Charge relay system of the active site.

The protein belongs to the aldehyde dehydrogenase family. Dimer of dimers. Requires K(+) as cofactor.

It carries out the reaction betaine aldehyde + NAD(+) + H2O = glycine betaine + NADH + 2 H(+). The protein operates within amine and polyamine biosynthesis; betaine biosynthesis via choline pathway; betaine from betaine aldehyde: step 1/1. Functionally, involved in the biosynthesis of the osmoprotectant glycine betaine. Catalyzes the irreversible oxidation of betaine aldehyde to the corresponding acid. The sequence is that of Betaine aldehyde dehydrogenase from Burkholderia ambifaria (strain ATCC BAA-244 / DSM 16087 / CCUG 44356 / LMG 19182 / AMMD) (Burkholderia cepacia (strain AMMD)).